Reading from the N-terminus, the 401-residue chain is L-rhamnonate dehydratase (401 aa).

Substrate is bound by residues H29 and R55. Mg(2+) contacts are provided by D222, E248, and E276. The active-site Proton acceptor is H325. E345 provides a ligand contact to substrate.

The protein belongs to the mandelate racemase/muconate lactonizing enzyme family. RhamD subfamily. Homooctamer; tetramer of dimers. It depends on Mg(2+) as a cofactor.

The catalysed reaction is L-rhamnonate = 2-dehydro-3-deoxy-L-rhamnonate + H2O. In terms of biological role, catalyzes the dehydration of L-rhamnonate to 2-keto-3-deoxy-L-rhamnonate (KDR). The protein is L-rhamnonate dehydratase of Tolumonas auensis (strain DSM 9187 / NBRC 110442 / TA 4).